A 136-amino-acid polypeptide reads, in one-letter code: Nanos homolog 2 (136 aa).

Residues 27 to 51 (KQRQEGEVAEEPNSRPQEKSEQDLE) are disordered. The span at 28–48 (QRQEGEVAEEPNSRPQEKSEQ) shows a compositional bias: basic and acidic residues. The Nanos-type zinc-finger motif lies at 60–114 (ICNFCKHNGESRHVYTSHQLKTPEGVVVCPILRHYVCPLCGATGDQAHTLKYCPL). Cysteine 61, cysteine 64, histidine 77, cysteine 88, cysteine 96, cysteine 99, histidine 107, and cysteine 112 together coordinate Zn(2+). Short sequence motifs (C2HC) lie at residues 61 to 88 (CNFC…VVVC) and 96 to 112 (CPLC…LKYC).

This sequence belongs to the nanos family. Interacts with CNOT1, CNOT3, CNOT6L, CNOT7 and CNOT9. Predominantly expressed in male germ cells. Expressed in self-renewing spermatogonial stem cells and developing gonads.

Its subcellular location is the cytoplasm. It is found in the P-body. It localises to the perinuclear region. In terms of biological role, plays a key role in the sexual differentiation of germ cells by promoting the male fate but suppressing the female fate. Represses the female fate pathways by suppressing meiosis, which in turn results in the promotion of the male fate. Maintains the suppression of meiosis by preventing STRA8 expression, which is required for premeiotic DNA replication, after CYP26B1 is decreased. Regulates the localization of the CCR4-NOT deadenylation complex to P-bodies and plays a role in recruiting the complex to trigger the degradation of mRNAs involved in meiosis. Required for the maintenance of the spermatogonial stem cell population. Not essential for the assembly of P-bodies but is required for the maintenance of their normal state. The sequence is that of Nanos homolog 2 (Nanos2) from Mus musculus (Mouse).